We begin with the raw amino-acid sequence, 296 residues long: tRNA uridine(34) hydroxylase (296 aa).

Positions 130-225 (RGDDVVFFDG…YGEAYGNDGY (96 aa)) constitute a Rhodanese domain. Cysteine 185 acts as the Cysteine persulfide intermediate in catalysis.

Belongs to the TrhO family.

It catalyses the reaction uridine(34) in tRNA + AH2 + O2 = 5-hydroxyuridine(34) in tRNA + A + H2O. In terms of biological role, catalyzes oxygen-dependent 5-hydroxyuridine (ho5U) modification at position 34 in tRNAs. The sequence is that of tRNA uridine(34) hydroxylase from Corynebacterium kroppenstedtii (strain DSM 44385 / JCM 11950 / CIP 105744 / CCUG 35717).